The primary structure comprises 297 residues: Putative phosphate permease MJ0630 (297 aa).

The next 9 helical transmembrane spans lie at 2-22, 45-65, 67-87, 99-119, 121-141, 154-174, 180-200, 225-245, and 274-294; these read ITIEISINLELIISFYLLFIL, LLILFSISVIIGSLFAKNVGS, VNSLSSDALTALIISALVMTL, TVIICSLIGLNFNSSNLYVFG, ILLSWILSPIIAVVIAYILYS, ITMIRYFLLISAAVVAFNLGS, VLGTFTTSQIIYIIGAIFLCL, FIAQLSGGLAVTIFTALGMPV, and NIIFWWVVAPIIALIIGFIIN.

Belongs to the inorganic phosphate transporter (PiT) (TC 2.A.20) family.

The protein resides in the cell membrane. Its function is as follows. Potential transporter for phosphate. The protein is Putative phosphate permease MJ0630 of Methanocaldococcus jannaschii (strain ATCC 43067 / DSM 2661 / JAL-1 / JCM 10045 / NBRC 100440) (Methanococcus jannaschii).